The chain runs to 342 residues: Farnesyl pyrophosphate synthase 2 (342 aa).

Isopentenyl diphosphate contacts are provided by K47, R50, and Q86. Residues D93 and D97 each contribute to the Mg(2+) site. R102 provides a ligand contact to dimethylallyl diphosphate. Residue R103 participates in isopentenyl diphosphate binding. Residues K190, T191, Q229, K246, and K255 each contribute to the dimethylallyl diphosphate site.

Belongs to the FPP/GGPP synthase family. The cofactor is Mg(2+).

It localises to the cytoplasm. The enzyme catalyses isopentenyl diphosphate + dimethylallyl diphosphate = (2E)-geranyl diphosphate + diphosphate. It catalyses the reaction isopentenyl diphosphate + (2E)-geranyl diphosphate = (2E,6E)-farnesyl diphosphate + diphosphate. It participates in isoprenoid biosynthesis; farnesyl diphosphate biosynthesis; farnesyl diphosphate from geranyl diphosphate and isopentenyl diphosphate: step 1/1. The protein operates within isoprenoid biosynthesis; geranyl diphosphate biosynthesis; geranyl diphosphate from dimethylallyl diphosphate and isopentenyl diphosphate: step 1/1. In terms of biological role, catalyzes the sequential condensation of isopentenyl pyrophosphate with the allylic pyrophosphates, dimethylallyl pyrophosphate, and then with the resultant geranylpyrophosphate to the ultimate product farnesyl pyrophosphate. The protein is Farnesyl pyrophosphate synthase 2 (FPS2) of Lupinus albus (White lupine).